Here is an 89-residue protein sequence, read N- to C-terminus: Small ribosomal subunit protein uS15 (89 aa).

This sequence belongs to the universal ribosomal protein uS15 family. As to quaternary structure, part of the 30S ribosomal subunit. Forms a bridge to the 50S subunit in the 70S ribosome, contacting the 23S rRNA.

In terms of biological role, one of the primary rRNA binding proteins, it binds directly to 16S rRNA where it helps nucleate assembly of the platform of the 30S subunit by binding and bridging several RNA helices of the 16S rRNA. Functionally, forms an intersubunit bridge (bridge B4) with the 23S rRNA of the 50S subunit in the ribosome. The protein is Small ribosomal subunit protein uS15 of Dictyoglomus thermophilum (strain ATCC 35947 / DSM 3960 / H-6-12).